A 400-amino-acid chain; its full sequence is D-alanyl-D-alanine carboxypeptidase DacC (400 aa).

A signal peptide spans 1–27 (MTQYSSLLRGLAAGSAFLFLFAPTAFA). S66 functions as the Acyl-ester intermediate in the catalytic mechanism. K69 functions as the Proton acceptor in the catalytic mechanism. S132 is a catalytic residue. K235 lines the substrate pocket. The required for inner membrane binding stretch occupies residues 383–400 (VWDFVMMKFHQWFGSWFS).

The protein belongs to the peptidase S11 family.

The protein localises to the cell inner membrane. It catalyses the reaction Preferential cleavage: (Ac)2-L-Lys-D-Ala-|-D-Ala. Also transpeptidation of peptidyl-alanyl moieties that are N-acyl substituents of D-alanine.. The protein operates within cell wall biogenesis; peptidoglycan biosynthesis. In terms of biological role, removes C-terminal D-alanyl residues from sugar-peptide cell wall precursors. This chain is D-alanyl-D-alanine carboxypeptidase DacC (dacC), found in Escherichia coli (strain K12).